A 328-amino-acid chain; its full sequence is Phenylalanine--tRNA ligase alpha subunit (328 aa).

Glutamate 253 provides a ligand contact to Mg(2+).

Belongs to the class-II aminoacyl-tRNA synthetase family. Phe-tRNA synthetase alpha subunit type 1 subfamily. Tetramer of two alpha and two beta subunits. The cofactor is Mg(2+).

The protein resides in the cytoplasm. It carries out the reaction tRNA(Phe) + L-phenylalanine + ATP = L-phenylalanyl-tRNA(Phe) + AMP + diphosphate + H(+). This chain is Phenylalanine--tRNA ligase alpha subunit, found in Coxiella burnetii (strain Dugway 5J108-111).